We begin with the raw amino-acid sequence, 313 residues long: MNTFSQVWVFSDTPSRLPELMNGAQALANQINTFVLNDADGTQAIQLGANHVWKLSGKPDERMIEDYAGVMADTIRQHGADGLVLLPNTRRGKLLAAKLGYRLNAAVSNDASAVSVQDGKATVKHMVYGGLAIGEERIATPYAVLTISSGTFDAAQPDASRTGETHTVEWQAPAVAITRTATQARQSNSVDLDKARLVVSVGRGIGSKENIALAEQLCKAIGAELACSRPVAENEKWMEHERYVGISNLMLKPELYLAVGISGQIQHMVGANASQTIFAINKDKNAPIFQYADYGIVGDAVKILPALTVALAR.

255-283 (LYLAVGISGQIQHMVGANASQTIFAINKD) contributes to the FAD binding site.

It belongs to the ETF alpha-subunit/FixB family. Heterodimer of FixA and FixB.

The protein operates within amine and polyamine metabolism; carnitine metabolism. Its function is as follows. Required for anaerobic carnitine reduction. May bring reductant to CaiA. The sequence is that of Protein FixB from Escherichia coli O1:K1 / APEC.